Reading from the N-terminus, the 165-residue chain is Xanthine-guanine phosphoribosyltransferase (165 aa).

Residues 41–42 (RG) and 98–106 (DDLTDTGKT) contribute to the 5-phospho-alpha-D-ribose 1-diphosphate site. Asp-99 is a binding site for Mg(2+). Asp-102 and Ile-145 together coordinate guanine. Xanthine is bound by residues Asp-102 and Ile-145. GMP contacts are provided by residues 102-106 (DTGKT) and 144-145 (WI).

It belongs to the purine/pyrimidine phosphoribosyltransferase family. XGPT subfamily. Homotetramer. Mg(2+) is required as a cofactor.

It is found in the cell inner membrane. It carries out the reaction GMP + diphosphate = guanine + 5-phospho-alpha-D-ribose 1-diphosphate. The catalysed reaction is XMP + diphosphate = xanthine + 5-phospho-alpha-D-ribose 1-diphosphate. The enzyme catalyses IMP + diphosphate = hypoxanthine + 5-phospho-alpha-D-ribose 1-diphosphate. It participates in purine metabolism; GMP biosynthesis via salvage pathway; GMP from guanine: step 1/1. The protein operates within purine metabolism; XMP biosynthesis via salvage pathway; XMP from xanthine: step 1/1. In terms of biological role, purine salvage pathway enzyme that catalyzes the transfer of the ribosyl-5-phosphate group from 5-phospho-alpha-D-ribose 1-diphosphate (PRPP) to the N9 position of the 6-oxopurines guanine and xanthine to form the corresponding ribonucleotides GMP (guanosine 5'-monophosphate) and XMP (xanthosine 5'-monophosphate), with the release of PPi. To a lesser extent, also acts on hypoxanthine. In Brucella suis (strain ATCC 23445 / NCTC 10510), this protein is Xanthine-guanine phosphoribosyltransferase.